The following is a 120-amino-acid chain: UPF0145 protein Mboo_1021 (120 aa).

The protein belongs to the UPF0145 family.

The sequence is that of UPF0145 protein Mboo_1021 from Methanoregula boonei (strain DSM 21154 / JCM 14090 / 6A8).